The following is a 255-amino-acid chain: Taurine import ATP-binding protein TauB (255 aa).

Positions 2–229 constitute an ABC transporter domain; sequence LQISHLYADY…RFVAGESSRS (228 aa). Position 34–41 (34–41) interacts with ATP; that stretch reads GPSGCGKT.

The protein belongs to the ABC transporter superfamily. Taurine importer (TC 3.A.1.17.1) family. The complex is composed of two ATP-binding proteins (TauB), two transmembrane proteins (TauC) and a solute-binding protein (TauA).

It is found in the cell inner membrane. The enzyme catalyses taurine(out) + ATP + H2O = taurine(in) + ADP + phosphate + H(+). Its function is as follows. Part of the ABC transporter complex TauABC involved in taurine import. Responsible for energy coupling to the transport system. The sequence is that of Taurine import ATP-binding protein TauB from Escherichia coli O6:K15:H31 (strain 536 / UPEC).